The primary structure comprises 252 residues: Thiamine thiazole synthase (252 aa).

NAD(+) is bound by residues Ser35, 54 to 55 (EK), Gly62, Val126, and 152 to 154 (HVD). Fe cation contacts are provided by Asp154 and His169. Met217 is an NAD(+) binding site. Arg227 provides a ligand contact to glycine.

This sequence belongs to the THI4 family. In terms of assembly, homooctamer; tetramer of dimers. Requires Fe(2+) as cofactor.

It carries out the reaction hydrogen sulfide + glycine + NAD(+) = ADP-5-ethyl-4-methylthiazole-2-carboxylate + nicotinamide + 3 H2O + H(+). It functions in the pathway cofactor biosynthesis; thiamine diphosphate biosynthesis. Functionally, involved in the biosynthesis of the thiazole moiety of thiamine. Catalyzes the conversion of NAD and glycine to adenosine diphosphate 5-(2-hydroxyethyl)-4-methylthiazole-2-carboxylate (ADT), an adenylated thiazole intermediate, using free sulfide as a source of sulfur. The polypeptide is Thiamine thiazole synthase (Pyrococcus furiosus (strain ATCC 43587 / DSM 3638 / JCM 8422 / Vc1)).